The primary structure comprises 442 residues: Radical S-adenosyl methionine domain-containing protein 1, mitochondrial (442 aa).

The transit peptide at 1–17 (MVPSGVRTGRWVAAARA) directs the protein to the mitochondrion. The 237-residue stretch at 34–270 (ESASTRAALY…RTVLRDAGFR (237 aa)) folds into the Radical SAM core domain. Y43 contributes to the S-adenosyl-L-methionine binding site. C49, C53, and C56 together coordinate [4Fe-4S] cluster. Residues G98, 99–100 (GT), E131, Q158, R170, and D195 each bind S-adenosyl-L-methionine.

The protein belongs to the anaerobic coproporphyrinogen-III oxidase family. HemW subfamily. The cofactor is [4Fe-4S] cluster.

It is found in the mitochondrion. In terms of biological role, may be a heme chaperone, appears to bind heme. Homologous bacterial proteins do not have oxygen-independent coproporphyrinogen-III oxidase activity. Binds 1 [4Fe-4S] cluster. The cluster is coordinated with 3 cysteines and an exchangeable S-adenosyl-L-methionine. This Mus musculus (Mouse) protein is Radical S-adenosyl methionine domain-containing protein 1, mitochondrial (Rsad1).